The sequence spans 391 residues: Acetylgalactosaminyl-O-glycosyl-glycoprotein beta-1,3-N-acetylglucosaminyltransferase (391 aa).

At 1–11 the chain is on the cytoplasmic side; the sequence is MALPSSRRFKS. The chain crosses the membrane as a helical; Signal-anchor for type II membrane protein span at residues 12-32; sequence PTTLAFFLVGVTLVVLNQWFL. Residues 33-391 are Lumenal-facing; sequence QEHRQEKAKG…TAGEQNPDAH (359 aa). Asn68 and Asn191 each carry an N-linked (GlcNAc...) asparagine glycan.

The protein belongs to the glycosyltransferase 31 family.

It is found in the golgi apparatus membrane. It carries out the reaction a 3-O-[N-acetyl-alpha-D-galactosaminyl]-L-threonyl-[protein] + UDP-N-acetyl-alpha-D-glucosamine = a 3-O-[N-acetyl-beta-D-glucosaminyl-(1-&gt;3)-N-acetyl-alpha-D-galactosaminyl]-L-threonyl-[protein] + UDP + H(+). The catalysed reaction is a 3-O-[N-acetyl-alpha-D-galactosaminyl]-L-seryl-[protein] + UDP-N-acetyl-alpha-D-glucosamine = 3-O-[N-acetyl-beta-D-glucosaminyl-(1-&gt;3)-N-acetyl-alpha-D-galactosaminyl]-L-seryl-[protein] + UDP + H(+). The protein operates within protein modification; protein glycosylation. Functionally, beta-1,3-N-acetylglucosaminyltransferase that synthesizes the core 3 structure of the O-glycan, an important precursor in the biosynthesis of mucin-type glycoproteins. Plays an important role in the synthesis of mucin-type O-glycans in digestive organs. This is Acetylgalactosaminyl-O-glycosyl-glycoprotein beta-1,3-N-acetylglucosaminyltransferase (B3gnt6) from Mus musculus (Mouse).